Reading from the N-terminus, the 862-residue chain is MQPTAEQFTEQAWAAIVAAQQLAQASRHQQLETEHLLLALLRQNGLAGRILSKTGVDVTTFEASVEGHLQRLPSLGSAPDSVFLGRSLNKALDRAEQRRDGFGDSFIAIEHLLLALAEDDRCGRQLLSQAGVTTNTLKEAITAVRGNQTVTDQNPEATYESLAKYGRDLTAAARDGQLDPVIGRDEEIRRTIQILSRRTKNNPVLIGEPGVGKTAIVEGLAQRIVNGDVPQALQNRQLITLDMGALIAGAKYRGEFEERLKAVLKEVTTSDGQIVLFIDEIHTVVGAGASGGAMDASNLLKPMLARGELRCIGATTLDEHRQHIEKDPALERRFQQVLVDQPTVPDTISILRGLKERYEVHHGVRIADSALVAAAMLSSRYITDRFLPDKAIDLVDESAARLKMEITSKPEQIDEIDRKILQLEMEKLSLGRESDSASQERLQRIERELAELGEQQSSLNAQWQSEKGAIDQLSALKEEIERVQLQVEQAKRNYDLNKAAELEYGTLATLQRQLQEQEDLLEDEDGTDKTLLREEVTEDDIAEVIAKWTGIPVARLVQSEMEKLLQLEDDLHQRVIGQNQAVTAVADAIQRSRAGLSDPNRPIASFLFLGPTGVGKTELSKALANRLFDSDDAMVRIDMSEYMEKHTVSRLIGAPPGYVGYEAGGQLTEAVRRRPYAVILFDEVEKAHPDVFNVMLQILDDGRVTDGQGRTVDFTNTVLILTSNIGSQSILELAGDPEQHTAMEQRVNEALKAKFRPEFLNRLDDQIIFRSLEKEELRRIVSLQVERLRSRLEQRKLDLQLSDIAADWLATIGFDPVYGARPLKRAIQRELETPIAKAILAGQLSEGQTVQVDAGDDKLSIS.

The Clp R domain maps to 5-147; sequence AEQFTEQAWA…KEAITAVRGN (143 aa). Repeat stretches follow at residues 8–72 and 84–147; these read FTEQ…LQRL and LGRS…VRGN. The segment at 160–341 is NBD1; the sequence is ESLAKYGRDL…RRFQQVLVDQ (182 aa). 207-214 contributes to the ATP binding site; it reads GEPGVGKT. The linker stretch occupies residues 342–550; that stretch reads PTVPDTISIL…IAEVIAKWTG (209 aa). The stretch at 392–526 forms a coiled coil; sequence IDLVDESAAR…QEDLLEDEDG (135 aa). The tract at residues 560 to 771 is NBD2; that stretch reads EMEKLLQLED…RLDDQIIFRS (212 aa). 610–617 is a binding site for ATP; sequence GPTGVGKT. The C-terminal stretch occupies residues 772 to 862; the sequence is LEKEELRRIV…DAGDDKLSIS (91 aa).

It belongs to the ClpA/ClpB family. In terms of assembly, homohexamer. The oligomerization is ATP-dependent.

It localises to the cytoplasm. In terms of biological role, part of a stress-induced multi-chaperone system, it is involved in the recovery of the cell from heat-induced damage, in cooperation with DnaK, DnaJ and GrpE. Acts before DnaK, in the processing of protein aggregates. Protein binding stimulates the ATPase activity; ATP hydrolysis unfolds the denatured protein aggregates, which probably helps expose new hydrophobic binding sites on the surface of ClpB-bound aggregates, contributing to the solubilization and refolding of denatured protein aggregates by DnaK. The protein is Chaperone protein ClpB 1 (clpB1) of Parasynechococcus marenigrum (strain WH8102).